A 98-amino-acid chain; its full sequence is Alpha-elicitin MGM-alpha (98 aa).

Intrachain disulfides connect cysteine 3–cysteine 71, cysteine 27–cysteine 56, and cysteine 51–cysteine 95.

It belongs to the elicitin family.

Its subcellular location is the secreted. Induces local and distal defense responses (incompatible hypersensitive reaction) in plants from the solanaceae and cruciferae families. Elicits leaf necrosis and causes the accumulation of pathogenesis-related proteins. Might interact with the lipidic molecules of the plasma membrane. This chain is Alpha-elicitin MGM-alpha, found in Phytophthora megasperma (Potato pink rot fungus).